The primary structure comprises 391 residues: Thyroid hormone receptor alpha-B (391 aa).

The interval 1–32 is modulating; the sequence is MAQWPEKEEEEQPMFGEEYTGYIPSYLEKDEP. NR C4-type zinc fingers lie at residues 33–53 and 71–95; these read CVVC…CEGC and CKYD…FKKC. The segment at residues 33–100 is a DNA-binding region (nuclear receptor); it reads CVVCGDKATG…RFKKCIAVGM (68 aa). The NR LBD domain maps to 143–388; that stretch reads AEWELIRMVT…PPLFLEVFED (246 aa).

The protein belongs to the nuclear hormone receptor family. NR1 subfamily.

It localises to the nucleus. Functionally, high affinity receptor for triiodothyronine. The chain is Thyroid hormone receptor alpha-B (thra2) from Paralichthys olivaceus (Bastard halibut).